The chain runs to 88 residues: Small ribosomal subunit protein uS17 (88 aa).

This sequence belongs to the universal ribosomal protein uS17 family. Part of the 30S ribosomal subunit.

Functionally, one of the primary rRNA binding proteins, it binds specifically to the 5'-end of 16S ribosomal RNA. This is Small ribosomal subunit protein uS17 from Ruthia magnifica subsp. Calyptogena magnifica.